The chain runs to 82 residues: DNA gyrase inhibitor YacG (82 aa).

Positions 9, 12, 27, and 31 each coordinate Zn(2+). The segment at 44-82 (IGLPHEGDPGDAPVEYLDDRDLTQPSPERQNESFHRYSE) is disordered. Residues 72 to 82 (RQNESFHRYSE) are compositionally biased toward basic and acidic residues.

It belongs to the DNA gyrase inhibitor YacG family. As to quaternary structure, interacts with GyrB. The cofactor is Zn(2+).

Inhibits all the catalytic activities of DNA gyrase by preventing its interaction with DNA. Acts by binding directly to the C-terminal domain of GyrB, which probably disrupts DNA binding by the gyrase. This chain is DNA gyrase inhibitor YacG, found in Rhodopirellula baltica (strain DSM 10527 / NCIMB 13988 / SH1).